Here is a 71-residue protein sequence, read N- to C-terminus: Phosphatidylinositol N-acetylglucosaminyltransferase subunit Y (71 aa).

Residues 1–3 lie on the Cytoplasmic side of the membrane; that stretch reads MFL. A helical transmembrane segment spans residues 4–26; sequence SLPMLTVLIPLVSLAGLFYSASV. Residues 27-44 are Lumenal-facing; it reads EDDFPQGCTSTTSLCFYS. The helical transmembrane segment at 45–65 threads the bilayer; it reads LLLPITIPVYVFFHLWTWMGI. Residues 66-71 are Cytoplasmic-facing; sequence KLFRHN.

Component of the glycosylphosphatidylinositol-N-acetylglucosaminyltransferase (GPI-GnT) complex composed at least by PIGA, PIGC, PIGH, PIGP, PIGQ, PIGY and DPM2. Interacts directly with PIGA; this interaction regulates glycosylphosphatidylinositol-N-acetylglucosaminyltransferase activity. Does not interact with Ras proteins.

Its subcellular location is the endoplasmic reticulum membrane. The protein operates within glycolipid biosynthesis; glycosylphosphatidylinositol-anchor biosynthesis. Functionally, part of the glycosylphosphatidylinositol-N-acetylglucosaminyltransferase (GPI-GnT) complex that catalyzes the transfer of N-acetylglucosamine from UDP-N-acetylglucosamine to phosphatidylinositol and participates in the first step of GPI biosynthesis. May act by regulating the catalytic subunit PIGA. This Bos taurus (Bovine) protein is Phosphatidylinositol N-acetylglucosaminyltransferase subunit Y.